Here is a 520-residue protein sequence, read N- to C-terminus: Maturase K (520 aa).

This sequence belongs to the intron maturase 2 family. MatK subfamily.

It is found in the plastid. The protein resides in the chloroplast. Its function is as follows. Usually encoded in the trnK tRNA gene intron. Probably assists in splicing its own and other chloroplast group II introns. The chain is Maturase K from Ruscus aculeatus (Butcher's broom).